We begin with the raw amino-acid sequence, 217 residues long: Probable nicotinate-nucleotide adenylyltransferase (217 aa).

The protein belongs to the NadD family.

The enzyme catalyses nicotinate beta-D-ribonucleotide + ATP + H(+) = deamido-NAD(+) + diphosphate. It functions in the pathway cofactor biosynthesis; NAD(+) biosynthesis; deamido-NAD(+) from nicotinate D-ribonucleotide: step 1/1. Its function is as follows. Catalyzes the reversible adenylation of nicotinate mononucleotide (NaMN) to nicotinic acid adenine dinucleotide (NaAD). This chain is Probable nicotinate-nucleotide adenylyltransferase, found in Dechloromonas aromatica (strain RCB).